A 464-amino-acid chain; its full sequence is UDP-glycosyltransferase 76C1 (464 aa).

Residues Ser-279, 338–340 (APQ), 355–363 (HNGWNSTLE), and 377–380 (KWDQ) contribute to the UDP-alpha-D-glucose site.

Belongs to the UDP-glycosyltransferase family.

With respect to regulation, inhibited by olomoucine and 3-isobutyl-1-methylxanthine. Involved in the N-glucosylation of cytokinins. Catalyzes the formation of both the 7-N and the 9-N-glucosides. In Arabidopsis thaliana (Mouse-ear cress), this protein is UDP-glycosyltransferase 76C1 (UGT76C1).